A 275-amino-acid polypeptide reads, in one-letter code: Elongation factor Ts (275 aa).

The interval 80–83 (TDFV) is involved in Mg(2+) ion dislocation from EF-Tu.

The protein belongs to the EF-Ts family.

It localises to the cytoplasm. In terms of biological role, associates with the EF-Tu.GDP complex and induces the exchange of GDP to GTP. It remains bound to the aminoacyl-tRNA.EF-Tu.GTP complex up to the GTP hydrolysis stage on the ribosome. The polypeptide is Elongation factor Ts (Kineococcus radiotolerans (strain ATCC BAA-149 / DSM 14245 / SRS30216)).